Reading from the N-terminus, the 137-residue chain is Basic phospholipase A2 homolog W6D49 (137 aa).

Residues 1 to 16 form the signal peptide; it reads MRTLWILAVLLVSVDG. Intrachain disulfides connect Cys-42–Cys-131, Cys-44–Cys-60, Cys-59–Cys-111, Cys-65–Cys-137, Cys-66–Cys-104, Cys-73–Cys-97, and Cys-91–Cys-102. Residues 121–133 form an important for membrane-damaging activities in eukaryotes and bacteria; heparin-binding region; sequence KKQQFNTGIFCSK.

As to quaternary structure, monomer. As to expression, expressed by the venom gland.

The protein localises to the secreted. With respect to regulation, heparin reduces its edema-inducing activity. Snake venom phospholipase A2 homolog that lacks enzymatic activity. Shows myotoxin activities and displays edema-inducing activities. A model of myotoxic mechanism has been proposed: an apo Lys49-PLA2 is activated by the entrance of a hydrophobic molecule (e.g. fatty acid) at the hydrophobic channel of the protein leading to a reorientation of a monomer. This reorientation causes a transition between 'inactive' to 'active' states, causing alignment of C-terminal and membrane-docking sites (MDoS) side-by-side and putting the membrane-disruption sites (MDiS) in the same plane, exposed to solvent and in a symmetric position for both monomers. The MDoS region stabilizes the toxin on membrane by the interaction of charged residues with phospholipid head groups. Subsequently, the MDiS region destabilizes the membrane with penetration of hydrophobic residues. This insertion causes a disorganization of the membrane, allowing an uncontrolled influx of ions (i.e. calcium and sodium), and eventually triggering irreversible intracellular alterations and cell death. This chain is Basic phospholipase A2 homolog W6D49, found in Calloselasma rhodostoma (Malayan pit viper).